The primary structure comprises 1084 residues: Cellulose synthase A catalytic subunit 2 [UDP-forming] (1084 aa).

Met-1 is modified (N-acetylmethionine). Topologically, residues 1–278 (MNTGGRLIAG…RSSRINPYRM (278 aa)) are cytoplasmic. The Zn(2+) site is built by Cys-39, Cys-42, Cys-58, Cys-61, Cys-66, Cys-69, Cys-81, and Cys-84. The RING-type; degenerate zinc-finger motif lies at 39–85 (CQICGDEIELTVSSELFVACNECAFPVCRPCYEYERREGNQACPQCK). Positions 230–259 (IKHEGGNNGRGSNDDDELDDPDMPMMDEGR) are disordered. The chain crosses the membrane as a helical span at residues 279-299 (LILCRLAILGLFFHYRILHPV). Residues 300–301 (ND) are Extracellular-facing. The helical transmembrane segment at 302-322 (AYGLWLTSVICEIWFAVSWIL) threads the bilayer. Residues 323-867 (DQFPKWYPIE…INSVVYPWTS (545 aa)) are Cytoplasmic-facing. Ser-361, Lys-367, Glu-368, and Asp-397 together coordinate UDP-alpha-D-glucose. The active site involves Asp-397. A coiled-coil region spans residues 451-477 (VRERRAMKRDYEEFKVKINALVATAQK). Lys-538 serves as a coordination point for UDP-alpha-D-glucose. Mn(2+) contacts are provided by Lys-539 and Asp-563. Asp-784 is an active-site residue. Residues 868-888 (LPLIVYCSLPAVCLLTGKFIV) form a helical membrane-spanning segment. Residues 889–893 (PEISN) lie on the Extracellular side of the membrane. A helical transmembrane segment spans residues 894-914 (YAGILFMLMFISIAVTGILEM). The Cytoplasmic segment spans residues 915–929 (QWGGVGIDDWWRNEQ). Residues 930–950 (FWVIGGASSHLFALFQGLLKV) traverse the membrane as a helical segment. Residues 951-979 (LAGVNTNFTVTSKAADDGAFSELYIFKWT) are Extracellular-facing. An N-linked (GlcNAc...) asparagine glycan is attached at Asn-957. A helical membrane pass occupies residues 980–1000 (TLLIPPTTLLIINIIGVIVGV). Residues 1001–1011 (SDAISNGYDSW) are Cytoplasmic-facing. The helical transmembrane segment at 1012-1032 (GPLFGRLFFALWVIVHLYPFL) threads the bilayer. At 1033 to 1041 (KGMLGKQDK) the chain is on the extracellular side. Residues 1042-1062 (MPTIIVVWSILLASILTLLWV) traverse the membrane as a helical segment. Over 1063 to 1084 (RVNPFVAKGGPVLEICGLNCGN) the chain is Cytoplasmic.

It belongs to the glycosyltransferase 2 family. Plant cellulose synthase subfamily. In terms of assembly, homodimer. Interaction through zinc finger domain. Mn(2+) is required as a cofactor. It depends on Zn(2+) as a cofactor. As to expression, strongly and ubiquitously expressed. Localized in some dividing and expanding cells, as well as in vascular tissues.

The protein resides in the cell membrane. The enzyme catalyses [(1-&gt;4)-beta-D-glucosyl](n) + UDP-alpha-D-glucose = [(1-&gt;4)-beta-D-glucosyl](n+1) + UDP + H(+). It functions in the pathway glycan metabolism; plant cellulose biosynthesis. In terms of biological role, catalytic subunit of cellulose synthase terminal complexes ('rosettes'), required for beta-1,4-glucan microfibril crystallization, a major mechanism of the cell wall formation. Involved in the primary cell wall formation. This chain is Cellulose synthase A catalytic subunit 2 [UDP-forming], found in Arabidopsis thaliana (Mouse-ear cress).